Consider the following 608-residue polypeptide: Serine/threonine-protein kinase SSN3 (608 aa).

The tract at residues 1-72 is disordered; it reads MSYSSASFRK…PGTVGTRTSI (72 aa). The segment covering 17-47 has biased composition (low complexity); it reads SQPSQTTTTTTSANQPQSQSQQQPLQQSQQQ. The segment covering 49–59 has biased composition (basic residues); sequence LHMKPNPHIPH. The region spanning 104-492 is the Protein kinase domain; the sequence is YQIMGYIAAG…ADQALLHPYF (389 aa). Residues 110 to 118 and K182 contribute to the ATP site; that span reads IAAGTYGKV. D307 (proton acceptor) is an active-site residue. Positions 523–608 are disordered; sequence MTTAANNNNN…LPGGIRKKRG (86 aa). Residues 528–583 are compositionally biased toward low complexity; that stretch reads NNNNNNNNNNNNNNNNNNNNNNNNNNNSGHQLSQQQNVQIQQVHQMQQQIHSQQLQ.

This sequence belongs to the protein kinase superfamily. CMGC Ser/Thr protein kinase family. CDC2/CDKX subfamily. As to quaternary structure, component of the SRB8-11 complex, a regulatory module of the Mediator complex. Mg(2+) serves as cofactor.

Its subcellular location is the nucleus. It catalyses the reaction L-seryl-[protein] + ATP = O-phospho-L-seryl-[protein] + ADP + H(+). The catalysed reaction is L-threonyl-[protein] + ATP = O-phospho-L-threonyl-[protein] + ADP + H(+). The enzyme catalyses [DNA-directed RNA polymerase] + ATP = phospho-[DNA-directed RNA polymerase] + ADP + H(+). Its function is as follows. Component of the SRB8-11 complex. The SRB8-11 complex is a regulatory module of the Mediator complex which is itself involved in regulation of basal and activated RNA polymerase II-dependent transcription. The SRB8-11 complex may be involved in the transcriptional repression of a subset of genes regulated by Mediator. It may inhibit the association of the Mediator complex with RNA polymerase II to form the holoenzyme complex. The SRB8-11 complex phosphorylates the C-terminal domain (CTD) of the largest subunit of RNA polymerase II. This is Serine/threonine-protein kinase SSN3 (SSN3) from Candida albicans (strain SC5314 / ATCC MYA-2876) (Yeast).